An 82-amino-acid chain; its full sequence is Small ribosomal subunit protein bS18 (82 aa).

The interval M1–C20 is disordered.

The protein belongs to the bacterial ribosomal protein bS18 family. In terms of assembly, part of the 30S ribosomal subunit. Forms a tight heterodimer with protein bS6.

Its function is as follows. Binds as a heterodimer with protein bS6 to the central domain of the 16S rRNA, where it helps stabilize the platform of the 30S subunit. The polypeptide is Small ribosomal subunit protein bS18 (Chelativorans sp. (strain BNC1)).